Consider the following 376-residue polypeptide: Ribonucleoside-diphosphate reductase subunit beta (376 aa).

The Fe cation site is built by D85, E116, and H119. The active site involves Y123. 3 residues coordinate Fe cation: E205, E239, and H242.

It belongs to the ribonucleoside diphosphate reductase small chain family. In terms of assembly, tetramer of two alpha and two beta subunits. Fe cation serves as cofactor.

It catalyses the reaction a 2'-deoxyribonucleoside 5'-diphosphate + [thioredoxin]-disulfide + H2O = a ribonucleoside 5'-diphosphate + [thioredoxin]-dithiol. In terms of biological role, provides the precursors necessary for DNA synthesis. Catalyzes the biosynthesis of deoxyribonucleotides from the corresponding ribonucleotides. The protein is Ribonucleoside-diphosphate reductase subunit beta (nrdB) of Haemophilus influenzae (strain ATCC 51907 / DSM 11121 / KW20 / Rd).